Here is a 560-residue protein sequence, read N- to C-terminus: Membrane protein insertase YidC (560 aa).

A helical membrane pass occupies residues 7-27 (ILIVALAIVSYVMVLKWNQDY). Residues 43–72 (APAIPDTPLGNNASASADVPSANGETSAPL) form a disordered region. 4 consecutive transmembrane segments (helical) span residues 367–387 (IVGN…GIFF), 437–457 (LGGC…YWVL), 468–488 (FMLW…PIIM), and 515–535 (PIIF…YWVV).

It belongs to the OXA1/ALB3/YidC family. Type 1 subfamily. As to quaternary structure, interacts with the Sec translocase complex via SecD. Specifically interacts with transmembrane segments of nascent integral membrane proteins during membrane integration.

Its subcellular location is the cell inner membrane. In terms of biological role, required for the insertion and/or proper folding and/or complex formation of integral membrane proteins into the membrane. Involved in integration of membrane proteins that insert both dependently and independently of the Sec translocase complex, as well as at least some lipoproteins. Aids folding of multispanning membrane proteins. The sequence is that of Membrane protein insertase YidC from Pseudomonas fluorescens (strain SBW25).